The chain runs to 1058 residues: Outer capsid protein VP4 (1058 aa).

It belongs to the orthoreovirus lambda-2 protein family.

It localises to the virion. It carries out the reaction a 5'-end diphospho-ribonucleoside in mRNA + GTP + H(+) = a 5'-end (5'-triphosphoguanosine)-ribonucleoside in mRNA + diphosphate. The catalysed reaction is a 5'-end (5'-triphosphoguanosine)-ribonucleoside in mRNA + S-adenosyl-L-methionine = a 5'-end (N(7)-methyl 5'-triphosphoguanosine)-ribonucleoside in mRNA + S-adenosyl-L-homocysteine. Outer capsid protein involved in mRNA capping. Catalyzes the last 3 enzymatic activities for formation of the 5' cap structure on the viral plus-strand transcripts, namely the RNA guanylyltransferase, RNA-7N- and RNA-2'O-methyltransferase activities. The protein is Outer capsid protein VP4 (S4) of Lymantria dispar cypovirus 1 (isolate Rao) (LdCPV-1).